Here is a 388-residue protein sequence, read N- to C-terminus: Phosphopentomutase (388 aa).

Positions 10, 282, 287, 323, 324, and 335 each coordinate Mn(2+).

This sequence belongs to the phosphopentomutase family. Requires Mn(2+) as cofactor.

Its subcellular location is the cytoplasm. It carries out the reaction 2-deoxy-alpha-D-ribose 1-phosphate = 2-deoxy-D-ribose 5-phosphate. It catalyses the reaction alpha-D-ribose 1-phosphate = D-ribose 5-phosphate. The protein operates within carbohydrate degradation; 2-deoxy-D-ribose 1-phosphate degradation; D-glyceraldehyde 3-phosphate and acetaldehyde from 2-deoxy-alpha-D-ribose 1-phosphate: step 1/2. Its function is as follows. Isomerase that catalyzes the conversion of deoxy-ribose 1-phosphate (dRib-1-P) and ribose 1-phosphate (Rib-1-P) to deoxy-ribose 5-phosphate (dRib-5-P) and ribose 5-phosphate (Rib-5-P), respectively. This chain is Phosphopentomutase, found in Acetivibrio thermocellus (strain ATCC 27405 / DSM 1237 / JCM 9322 / NBRC 103400 / NCIMB 10682 / NRRL B-4536 / VPI 7372) (Clostridium thermocellum).